A 216-amino-acid polypeptide reads, in one-letter code: Protein-L-isoaspartate O-methyltransferase (216 aa).

Ser-63 is a catalytic residue.

It belongs to the methyltransferase superfamily. L-isoaspartyl/D-aspartyl protein methyltransferase family.

The protein resides in the cytoplasm. It catalyses the reaction [protein]-L-isoaspartate + S-adenosyl-L-methionine = [protein]-L-isoaspartate alpha-methyl ester + S-adenosyl-L-homocysteine. In terms of biological role, catalyzes the methyl esterification of L-isoaspartyl residues in peptides and proteins that result from spontaneous decomposition of normal L-aspartyl and L-asparaginyl residues. It plays a role in the repair and/or degradation of damaged proteins. The protein is Protein-L-isoaspartate O-methyltransferase of Rhodopseudomonas palustris (strain BisB18).